Consider the following 27-residue polypeptide: Dermaseptin-like peptide (27 aa).

Has antimicrobial activity against the Gram-positive bacterium M.luteus and the yeast C.albicans. Has hemolytic activity on human and duck erythrocytes. In Schistosoma mansoni (Blood fluke), this protein is Dermaseptin-like peptide.